The sequence spans 392 residues: ATP phosphoribosyltransferase regulatory subunit (392 aa).

The protein belongs to the class-II aminoacyl-tRNA synthetase family. HisZ subfamily. As to quaternary structure, heteromultimer composed of HisG and HisZ subunits.

It localises to the cytoplasm. The protein operates within amino-acid biosynthesis; L-histidine biosynthesis; L-histidine from 5-phospho-alpha-D-ribose 1-diphosphate: step 1/9. Functionally, required for the first step of histidine biosynthesis. May allow the feedback regulation of ATP phosphoribosyltransferase activity by histidine. The chain is ATP phosphoribosyltransferase regulatory subunit from Marinomonas sp. (strain MWYL1).